Here is a 362-residue protein sequence, read N- to C-terminus: UDP-N-acetylglucosamine--N-acetylmuramyl-(pentapeptide) pyrophosphoryl-undecaprenol N-acetylglucosamine transferase (362 aa).

UDP-N-acetyl-alpha-D-glucosamine contacts are provided by residues 15–17, asparagine 127, arginine 165, serine 191, isoleucine 247, 266–271, and glutamine 292; these read TGG and ALTVSE.

The protein belongs to the glycosyltransferase 28 family. MurG subfamily.

It localises to the cell inner membrane. It catalyses the reaction di-trans,octa-cis-undecaprenyl diphospho-N-acetyl-alpha-D-muramoyl-L-alanyl-D-glutamyl-meso-2,6-diaminopimeloyl-D-alanyl-D-alanine + UDP-N-acetyl-alpha-D-glucosamine = di-trans,octa-cis-undecaprenyl diphospho-[N-acetyl-alpha-D-glucosaminyl-(1-&gt;4)]-N-acetyl-alpha-D-muramoyl-L-alanyl-D-glutamyl-meso-2,6-diaminopimeloyl-D-alanyl-D-alanine + UDP + H(+). It functions in the pathway cell wall biogenesis; peptidoglycan biosynthesis. Its function is as follows. Cell wall formation. Catalyzes the transfer of a GlcNAc subunit on undecaprenyl-pyrophosphoryl-MurNAc-pentapeptide (lipid intermediate I) to form undecaprenyl-pyrophosphoryl-MurNAc-(pentapeptide)GlcNAc (lipid intermediate II). The polypeptide is UDP-N-acetylglucosamine--N-acetylmuramyl-(pentapeptide) pyrophosphoryl-undecaprenol N-acetylglucosamine transferase (Shewanella oneidensis (strain ATCC 700550 / JCM 31522 / CIP 106686 / LMG 19005 / NCIMB 14063 / MR-1)).